The primary structure comprises 104 residues: Large ribosomal subunit protein bL21 (104 aa).

Belongs to the bacterial ribosomal protein bL21 family. Part of the 50S ribosomal subunit. Contacts protein L20.

Its function is as follows. This protein binds to 23S rRNA in the presence of protein L20. The polypeptide is Large ribosomal subunit protein bL21 (Francisella tularensis subsp. holarctica (strain FTNF002-00 / FTA)).